Consider the following 399-residue polypeptide: Chorismate synthase (399 aa).

Residues R40 and R46 each coordinate NADP(+). Residues 129-131, 257-258, G302, 317-321, and R343 contribute to the FMN site; these read RSS, QA, and KPISS.

It belongs to the chorismate synthase family. In terms of assembly, homotetramer. FMNH2 is required as a cofactor.

The catalysed reaction is 5-O-(1-carboxyvinyl)-3-phosphoshikimate = chorismate + phosphate. It functions in the pathway metabolic intermediate biosynthesis; chorismate biosynthesis; chorismate from D-erythrose 4-phosphate and phosphoenolpyruvate: step 7/7. Catalyzes the anti-1,4-elimination of the C-3 phosphate and the C-6 proR hydrogen from 5-enolpyruvylshikimate-3-phosphate (EPSP) to yield chorismate, which is the branch point compound that serves as the starting substrate for the three terminal pathways of aromatic amino acid biosynthesis. This reaction introduces a second double bond into the aromatic ring system. The chain is Chorismate synthase from Chlorobium chlorochromatii (strain CaD3).